The following is an 896-amino-acid chain: MQKTQMLSAEIFRRRGHIRKQCPLCKSHFWTLRPDQEVCGDQPCTPYGFIGNPPTKVAVESLRDVRERFLSFFERHGHARIKRYPVVARWRDDVYLVGASIYDFQPWVTSGAVPPPANPLTISQPSIRLTDVDKVGRSGRHLTGFEMMAHHAFNYPDKYVYWIDETTEYAYRFFTEELGIPPEEITFKESMWEGGGNAGECFEVLVRGLEAATLVFMHYEVKDGKYVELPLKIVDTGYGLERIYWLIKGTPTIYDAVFGPYLAKVRERLGVPEPPRDVMAKASIYFGQMDPEVISLDKAYDIIAEKIGVDGKWLREVVKPQEALYVLADHSRTVAWMIADGVIPSNSGAGYLARLLIRRALRGLMLAGVDAPLVELFDLHLKELRYDYPEVWEARSLILELVDMEEKKYREVLKSAPAVVKRALEENRRRGKAGLDKEDLVTLYDSYGLPPEVVAEAAKSMGIEVKVPDDFYSLLASRHVRREKGREATLVEMAKVADLPRTRELFYEDAYMRTFKAKVLRVIDGKYVVLDQTAFYAEGGGQPADTGVLRHSGGVAKVVDVQRVGHVIVHVVEGDVPQEGSEVVGEVDWERRYALMKMHTGTHVLIQSIRRVLGPHIWQAGAQKDIPFSRIDVTHYKLPTPEEVAKIERLANDVVQRDLPVYVKVMPRNEAEAKYGFILYQGGVVPAREIRVVQIGPDDEPYDVQACGGTHLRRTGEIGLIKVHKVERIADGVVRFIFTTGPHAVAYVQELERQAAEAAALGGGSKEELVEVVKRLLKRAEEAEKKARHYAELYAAALAENLKAEAVGQRRLAVVELDDEELAKRVALLATKRDPDLVLVVKAGERVTIYTGGVDVGPIVKALREIGFRGGGSKTFAQGVYAGDVEKLKEAIRRAL.

Zn(2+) is bound by residues H599, H603, C707, and H711.

It belongs to the class-II aminoacyl-tRNA synthetase family. The cofactor is Zn(2+).

It localises to the cytoplasm. The enzyme catalyses tRNA(Ala) + L-alanine + ATP = L-alanyl-tRNA(Ala) + AMP + diphosphate. In terms of biological role, catalyzes the attachment of alanine to tRNA(Ala) in a two-step reaction: alanine is first activated by ATP to form Ala-AMP and then transferred to the acceptor end of tRNA(Ala). Also edits incorrectly charged Ser-tRNA(Ala) and Gly-tRNA(Ala) via its editing domain. The polypeptide is Alanine--tRNA ligase (Pyrobaculum calidifontis (strain DSM 21063 / JCM 11548 / VA1)).